The chain runs to 133 residues: Small ribosomal subunit protein uS8 (133 aa).

This sequence belongs to the universal ribosomal protein uS8 family. In terms of assembly, part of the 30S ribosomal subunit. Contacts proteins S5 and S12.

Its function is as follows. One of the primary rRNA binding proteins, it binds directly to 16S rRNA central domain where it helps coordinate assembly of the platform of the 30S subunit. In Endomicrobium trichonymphae, this protein is Small ribosomal subunit protein uS8.